The sequence spans 218 residues: Molybdenum cofactor guanylyltransferase (218 aa).

Residues 16–18 (LAG), Lys-28, Asn-56, Asp-74, and Asp-109 each bind GTP. Asp-109 is a binding site for Mg(2+).

This sequence belongs to the MobA family. Monomer. Mg(2+) is required as a cofactor.

It is found in the cytoplasm. It catalyses the reaction Mo-molybdopterin + GTP + H(+) = Mo-molybdopterin guanine dinucleotide + diphosphate. In terms of biological role, transfers a GMP moiety from GTP to Mo-molybdopterin (Mo-MPT) cofactor (Moco or molybdenum cofactor) to form Mo-molybdopterin guanine dinucleotide (Mo-MGD) cofactor. This Sinorhizobium fredii (strain NBRC 101917 / NGR234) protein is Molybdenum cofactor guanylyltransferase.